We begin with the raw amino-acid sequence, 429 residues long: Histidine--tRNA ligase (429 aa).

The protein belongs to the class-II aminoacyl-tRNA synthetase family. As to quaternary structure, homodimer.

The protein resides in the cytoplasm. It carries out the reaction tRNA(His) + L-histidine + ATP = L-histidyl-tRNA(His) + AMP + diphosphate + H(+). This is Histidine--tRNA ligase from Dechloromonas aromatica (strain RCB).